The following is a 137-amino-acid chain: Holo-[acyl-carrier-protein] synthase (137 aa).

Residues aspartate 8 and glutamate 61 each coordinate Mg(2+).

This sequence belongs to the P-Pant transferase superfamily. AcpS family. The cofactor is Mg(2+).

The protein resides in the cytoplasm. It catalyses the reaction apo-[ACP] + CoA = holo-[ACP] + adenosine 3',5'-bisphosphate + H(+). Its function is as follows. Transfers the 4'-phosphopantetheine moiety from coenzyme A to a Ser of acyl-carrier-protein. The sequence is that of Holo-[acyl-carrier-protein] synthase from Afipia carboxidovorans (strain ATCC 49405 / DSM 1227 / KCTC 32145 / OM5) (Oligotropha carboxidovorans).